The chain runs to 24 residues: Ascaphin-2 (24 aa).

Expressed by the skin glands.

The protein localises to the secreted. Antimicrobial peptide that shows higher potency against Gram-negative bacteria than against Gram-positive bacteria. Has a very week hemolytic activity. The protein is Ascaphin-2 of Ascaphus truei (Coastal tailed frog).